Here is a 106-residue protein sequence, read N- to C-terminus: Envelope small membrane protein (106 aa).

At 1 to 11 (MMNLLNTSLEE) the chain is on the virion surface side. The helical transmembrane segment at 12-32 (NGSFLTALYVICEFVALYLLG) threads the bilayer. The Intravirion portion of the chain corresponds to 33–106 (RALQAFVQAA…ANFQNGKLHT (74 aa)).

It belongs to the gammacoronaviruses E protein family. As to quaternary structure, homooligomer. Interacts with the M membrane protein in the budding compartment of the host cell, which is located between endoplasmic reticulum and the Golgi complex. The cytoplasmic tails of both proteins are important for this function. Interacts with Nucleoprotein.

Its subcellular location is the host Golgi apparatus membrane. Plays a central role in virus morphogenesis and assembly. Acts as a viroporin and self-assembles in host membranes forming pentameric protein-lipid pores that allow ion transport. Also plays a role in the induction of apoptosis. The chain is Envelope small membrane protein from Gallus gallus (Chicken).